The following is a 180-amino-acid chain: MASSVMSSAAVATRGNGAQASMVAPFTGLKSTASFPVSRKQNLDITSIASNGGRVRCMQVWPPINMKKYETLSYLPDLSDEQLLKEVEYLLKNGWVPCLEFETEHGFVYRENNKSPGYYDGRYWTMWKLPMFGCTDATQVLAEVEEAKKAYPQAWIRIIGFDNVRQVQCISFIAYKPEGY.

Residues 1-56 constitute a chloroplast transit peptide; sequence MASSVMSSAAVATRGNGAQASMVAPFTGLKSTASFPVSRKQNLDITSIASNGGRVR.

This sequence belongs to the RuBisCO small chain family. In terms of assembly, heterohexadecamer of 8 large and 8 small subunits.

Its subcellular location is the plastid. The protein localises to the chloroplast. In terms of biological role, ruBisCO catalyzes two reactions: the carboxylation of D-ribulose 1,5-bisphosphate, the primary event in carbon dioxide fixation, as well as the oxidative fragmentation of the pentose substrate. Both reactions occur simultaneously and in competition at the same active site. Although the small subunit is not catalytic it is essential for maximal activity. This is Ribulose bisphosphate carboxylase small subunit, chloroplastic 5 from Solanum tuberosum (Potato).